The chain runs to 252 residues: Probable phosphatase Shewmr4_2619 (252 aa).

Zn(2+) contacts are provided by H8, H10, H16, H41, E74, H102, H132, D193, and H195.

It belongs to the PHP family. Requires Zn(2+) as cofactor.

In Shewanella sp. (strain MR-4), this protein is Probable phosphatase Shewmr4_2619.